Reading from the N-terminus, the 273-residue chain is Dermonecrotic toxin LdSicTox-alphaIB1aii (273 aa).

The active site involves His5. Residues Glu25 and Asp27 each contribute to the Mg(2+) site. His41 serves as the catalytic Nucleophile. Cystine bridges form between Cys45/Cys51 and Cys47/Cys190. Asp85 contributes to the Mg(2+) binding site. Asn250 carries an N-linked (GlcNAc...) asparagine glycan.

This sequence belongs to the arthropod phospholipase D family. Class II subfamily. Mg(2+) is required as a cofactor. As to expression, expressed by the venom gland.

The protein resides in the secreted. It carries out the reaction an N-(acyl)-sphingosylphosphocholine = an N-(acyl)-sphingosyl-1,3-cyclic phosphate + choline. The catalysed reaction is an N-(acyl)-sphingosylphosphoethanolamine = an N-(acyl)-sphingosyl-1,3-cyclic phosphate + ethanolamine. The enzyme catalyses a 1-acyl-sn-glycero-3-phosphocholine = a 1-acyl-sn-glycero-2,3-cyclic phosphate + choline. It catalyses the reaction a 1-acyl-sn-glycero-3-phosphoethanolamine = a 1-acyl-sn-glycero-2,3-cyclic phosphate + ethanolamine. Dermonecrotic toxins cleave the phosphodiester linkage between the phosphate and headgroup of certain phospholipids (sphingolipid and lysolipid substrates), forming an alcohol (often choline) and a cyclic phosphate. This toxin acts on sphingomyelin (SM). It may also act on ceramide phosphoethanolamine (CPE), lysophosphatidylcholine (LPC) and lysophosphatidylethanolamine (LPE), but not on lysophosphatidylserine (LPS), and lysophosphatidylglycerol (LPG). It acts by transphosphatidylation, releasing exclusively cyclic phosphate products as second products. Induces dermonecrosis, hemolysis, increased vascular permeability, edema, inflammatory response, and platelet aggregation. This is Dermonecrotic toxin LdSicTox-alphaIB1aii from Loxosceles deserta (Desert recluse spider).